Consider the following 229-residue polypeptide: uncharacterized protein (229 aa).

This is an uncharacterized protein from Methanocaldococcus jannaschii (strain ATCC 43067 / DSM 2661 / JAL-1 / JCM 10045 / NBRC 100440) (Methanococcus jannaschii).